Consider the following 1291-residue polypeptide: DNA-directed RNA polymerase subunit beta (1291 aa).

This sequence belongs to the RNA polymerase beta chain family. As to quaternary structure, the RNAP catalytic core consists of 2 alpha, 1 beta, 1 beta' and 1 omega subunit. When a sigma factor is associated with the core the holoenzyme is formed, which can initiate transcription.

The catalysed reaction is RNA(n) + a ribonucleoside 5'-triphosphate = RNA(n+1) + diphosphate. DNA-dependent RNA polymerase catalyzes the transcription of DNA into RNA using the four ribonucleoside triphosphates as substrates. This chain is DNA-directed RNA polymerase subunit beta, found in Mycoplasma mycoides subsp. mycoides SC (strain CCUG 32753 / NCTC 10114 / PG1).